Reading from the N-terminus, the 829-residue chain is Periplasmic nitrate reductase (829 aa).

A signal peptide (tat-type signal) is located at residues 1–27; sequence MNRRDFMKANAVIAAASAAGLALPAGA. Residues 39 to 95 enclose the 4Fe-4S Mo/W bis-MGD-type domain; sequence LEWNKAPCRFCGTGCSVMVATREGKVVATHGDANSEVNRGLSCIKGYFLSKIMYGRD. Cys46, Cys49, Cys53, and Cys81 together coordinate [4Fe-4S] cluster. Mo-bis(molybdopterin guanine dinucleotide) is bound by residues Lys83, Gln150, Asn175, Cys179, 212–219, 243–247, 262–264, Met373, Gln377, Asn483, 509–510, Lys532, Asp559, and 719–728; these read WGSNMAEM, STFEH, QTD, SD, and TGRVLEHWHS. Trp795 serves as a coordination point for substrate. Mo-bis(molybdopterin guanine dinucleotide)-binding residues include Asn803 and Lys820.

The protein belongs to the prokaryotic molybdopterin-containing oxidoreductase family. NasA/NapA/NarB subfamily. Component of the periplasmic nitrate reductase NapAB complex composed of NapA and NapB. It depends on [4Fe-4S] cluster as a cofactor. Requires Mo-bis(molybdopterin guanine dinucleotide) as cofactor. Predicted to be exported by the Tat system. The position of the signal peptide cleavage has not been experimentally proven.

It localises to the periplasm. It carries out the reaction 2 Fe(II)-[cytochrome] + nitrate + 2 H(+) = 2 Fe(III)-[cytochrome] + nitrite + H2O. Functionally, catalytic subunit of the periplasmic nitrate reductase complex NapAB. Receives electrons from NapB and catalyzes the reduction of nitrate to nitrite. In Shewanella denitrificans (strain OS217 / ATCC BAA-1090 / DSM 15013), this protein is Periplasmic nitrate reductase.